The sequence spans 272 residues: Putative phosphoenolpyruvate synthase regulatory protein (272 aa).

An ADP-binding site is contributed by Gly-152–Thr-159.

This sequence belongs to the pyruvate, phosphate/water dikinase regulatory protein family. PSRP subfamily.

It catalyses the reaction [pyruvate, water dikinase] + ADP = [pyruvate, water dikinase]-phosphate + AMP + H(+). The catalysed reaction is [pyruvate, water dikinase]-phosphate + phosphate + H(+) = [pyruvate, water dikinase] + diphosphate. In terms of biological role, bifunctional serine/threonine kinase and phosphorylase involved in the regulation of the phosphoenolpyruvate synthase (PEPS) by catalyzing its phosphorylation/dephosphorylation. This chain is Putative phosphoenolpyruvate synthase regulatory protein, found in Pseudomonas putida (strain W619).